A 284-amino-acid polypeptide reads, in one-letter code: uncharacterized protein (284 aa).

A signal peptide spans 1 to 24; it reads MLYSRESRTTVLFLALVTSLTVLC. Over 25–84 the chain is Cytoplasmic; sequence HSVDVTTVFTTSTITEITTVTAAPQPQNKAETALNTATNIIQTMQFLFNCAPFKWKGPLK. A helical membrane pass occupies residues 85–104; it reads ITSCALNFIVLLLTAWGYLL. The Extracellular portion of the chain corresponds to 105-284; the sequence is KYLQENKLNS…SVHMYSSSLL (180 aa). Asn-270 is a glycosylation site (N-linked (GlcNAc...) asparagine).

To yeast YNL033w.

It is found in the cell membrane. This is an uncharacterized protein from Saccharomyces cerevisiae (strain ATCC 204508 / S288c) (Baker's yeast).